Consider the following 31-residue polypeptide: Photosystem II reaction center protein T (31 aa).

The helical transmembrane segment at 3–23 (AIVYTFLLVGTLGIIFFAIFF) threads the bilayer.

The protein belongs to the PsbT family. PSII is composed of 1 copy each of membrane proteins PsbA, PsbB, PsbC, PsbD, PsbE, PsbF, PsbH, PsbI, PsbJ, PsbK, PsbL, PsbM, PsbT, PsbY, PsbZ, Psb30/Ycf12, at least 3 peripheral proteins of the oxygen-evolving complex and a large number of cofactors. It forms dimeric complexes.

The protein resides in the plastid. The protein localises to the chloroplast thylakoid membrane. In terms of biological role, found at the monomer-monomer interface of the photosystem II (PS II) dimer, plays a role in assembly and dimerization of PSII. PSII is a light-driven water plastoquinone oxidoreductase, using light energy to abstract electrons from H(2)O, generating a proton gradient subsequently used for ATP formation. In Ostreococcus tauri, this protein is Photosystem II reaction center protein T.